The sequence spans 349 residues: Phenylalanine--tRNA ligase alpha subunit (349 aa).

Glu-258 lines the Mg(2+) pocket.

Belongs to the class-II aminoacyl-tRNA synthetase family. Phe-tRNA synthetase alpha subunit type 1 subfamily. Tetramer of two alpha and two beta subunits. Mg(2+) serves as cofactor.

Its subcellular location is the cytoplasm. The catalysed reaction is tRNA(Phe) + L-phenylalanine + ATP = L-phenylalanyl-tRNA(Phe) + AMP + diphosphate + H(+). In Rickettsia canadensis (strain McKiel), this protein is Phenylalanine--tRNA ligase alpha subunit.